The chain runs to 217 residues: Probable GTP-binding protein EngB (217 aa).

Residues 27 to 201 (TGIEVAFAGR…RDKLDTWFSE (175 aa)) enclose the EngB-type G domain. GTP contacts are provided by residues 35-42 (GRSNAGKS), 62-66 (GRTQL), 80-83 (DLPG), 147-150 (TKAD), and 180-182 (FSS). Residues S42 and T64 each coordinate Mg(2+).

It belongs to the TRAFAC class TrmE-Era-EngA-EngB-Septin-like GTPase superfamily. EngB GTPase family. Mg(2+) serves as cofactor.

Necessary for normal cell division and for the maintenance of normal septation. This is Probable GTP-binding protein EngB from Edwardsiella ictaluri (strain 93-146).